Consider the following 55-residue polypeptide: Large ribosomal subunit protein bL33 (55 aa).

The protein belongs to the bacterial ribosomal protein bL33 family.

The chain is Large ribosomal subunit protein bL33 from Ruegeria pomeroyi (strain ATCC 700808 / DSM 15171 / DSS-3) (Silicibacter pomeroyi).